Consider the following 381-residue polypeptide: Sulfofructose kinase (381 aa).

ATP-binding positions include glycine 10, 72 to 73, and 100 to 103; these read RY and GNGT. Position 101 (asparagine 101) interacts with Mg(2+). Residue aspartate 131 is the Proton acceptor of the active site.

It belongs to the phosphofructokinase type A (PFKA) family. The cofactor is Mg(2+).

It catalyses the reaction 6-deoxy-6-sulfo-D-fructose + ATP = 6-deoxy-6-sulfo-D-fructose 1-phosphate + ADP + H(+). In terms of biological role, part of the sulfo-EMP2 pathway, a D-sulfoquinovose degradation pathway that produces sulfolactate (SL). Phosphorylates 6-deoxy-6-sulfo-D-fructose (SF) to 6-deoxy-6-sulfo-D-fructose 1-phosphate (SFP). In Alkalicoccus urumqiensis (Bacillus urumqiensis), this protein is Sulfofructose kinase.